A 575-amino-acid chain; its full sequence is DNA mismatch repair protein MutL (575 aa).

Belongs to the DNA mismatch repair MutL/HexB family.

This protein is involved in the repair of mismatches in DNA. It is required for dam-dependent methyl-directed DNA mismatch repair. May act as a 'molecular matchmaker', a protein that promotes the formation of a stable complex between two or more DNA-binding proteins in an ATP-dependent manner without itself being part of a final effector complex. This chain is DNA mismatch repair protein MutL, found in Coxiella burnetii (strain CbuG_Q212) (Coxiella burnetii (strain Q212)).